Reading from the N-terminus, the 359-residue chain is tRNA-specific 2-thiouridylase MnmA (359 aa).

ATP is bound by residues 7–14 (AMSGGVDS) and methionine 33. Cysteine 101 functions as the Nucleophile in the catalytic mechanism. The cysteines at positions 101 and 198 are disulfide-linked. Residue glycine 125 coordinates ATP. The interaction with tRNA stretch occupies residues 148–150 (KDQ). Residue cysteine 198 is the Cysteine persulfide intermediate of the active site.

The protein belongs to the MnmA/TRMU family.

The protein resides in the cytoplasm. The enzyme catalyses S-sulfanyl-L-cysteinyl-[protein] + uridine(34) in tRNA + AH2 + ATP = 2-thiouridine(34) in tRNA + L-cysteinyl-[protein] + A + AMP + diphosphate + H(+). In terms of biological role, catalyzes the 2-thiolation of uridine at the wobble position (U34) of tRNA, leading to the formation of s(2)U34. This chain is tRNA-specific 2-thiouridylase MnmA, found in Chloroflexus aggregans (strain MD-66 / DSM 9485).